The following is a 427-amino-acid chain: MDLNIKLDKSGELFNESKKYLVGGVNSPVRSFKPFPFFVKSAKSCFLYDEDGNEFIDYCLAYGPMVLGHANEKILNAVKEQMDFGTAYGVPSEKEIILAKEVINRIPCAEMVRFVNSGTEATMGAIRLARGVTKRNKIIKFEGAFHGAHDYVLVKSGSGALTHGAPNSPGIPEDTTKNTLLIPFNDEGAVRKVISENKGEIACIILEPMMGNVGCILPKDGYLKFLREITEENGIILIFDEVITGFRLSKGGAQEYYGVKADIATLGKILGGGFPIGAIAGKKELMEQFSPKGQVYQAGTFNGNPISVTAGIETLKNLNNAFYKETAKKAEILSNYLIETTEKYKIPARVYSVASIFQVYFNDKDILTYDDAKSSDTEKFMKYFYSLLENGVFIPPSQFECCFTSIKHDDFVLEKTMNAIDIAMKKL.

Lys-268 carries the post-translational modification N6-(pyridoxal phosphate)lysine.

This sequence belongs to the class-III pyridoxal-phosphate-dependent aminotransferase family. HemL subfamily. Pyridoxal 5'-phosphate serves as cofactor.

It is found in the cytoplasm. The enzyme catalyses (S)-4-amino-5-oxopentanoate = 5-aminolevulinate. It participates in porphyrin-containing compound metabolism; protoporphyrin-IX biosynthesis; 5-aminolevulinate from L-glutamyl-tRNA(Glu): step 2/2. This is Glutamate-1-semialdehyde 2,1-aminomutase from Methanococcus vannielii (strain ATCC 35089 / DSM 1224 / JCM 13029 / OCM 148 / SB).